We begin with the raw amino-acid sequence, 1621 residues long: ALK tyrosine kinase receptor (1621 aa).

The first 18 residues, 1 to 18 (MGAAGFLWLLPPLLLAAA), serve as a signal peptide directing secretion. Topologically, residues 19-1042 (SYSGAATDQR…PHLPLSLILS (1024 aa)) are extracellular. Residues 48–70 (RLQRKSLAVDFVVPSLFRVYARD) are heparin-binding region. N-linked (GlcNAc...) asparagine glycans are attached at residues Asn174, Asn248, Asn289, Asn328, Asn415, Asn428, Asn449, Asn567, Asn575, Asn631, and Asn673. The MAM 1 domain maps to 268–431 (LECSFDFPCE…DFFALKNCSE (164 aa)). One can recognise an LDL-receptor class A domain in the interval 441-477 (LQSSFTCWNGTVLQLGQACDFHQDCAQGEDEGQLCSK). One can recognise an MAM 2 domain in the interval 482–640 (FYCNFENGFC…NISISLDCYL (159 aa)). Residues Cys692 and Cys705 are joined by a disulfide bond. Asn713 is a glycosylation site (N-linked (GlcNAc...) asparagine). A disulfide bond links Cys787 and Cys798. 3 N-linked (GlcNAc...) asparagine glycosylation sites follow: Asn812, Asn868, and Asn890. Cys910 and Cys932 form a disulfide bridge. Asn990 carries an N-linked (GlcNAc...) asparagine glycan. Intrachain disulfides connect Cys991/Cys999, Cys994/Cys1010, and Cys1012/Cys1025. The tract at residues 991 to 1029 (CSHCEVDECHMDPESHKVICFCDHGTVLADDGVSCIVSP) is EGF-like. Residues 1043-1063 (VVTSALVAALVLAFSGIMIVY) traverse the membrane as a helical segment. Topologically, residues 1064–1621 (RRKHQELQAM…SKNKVTQPGP (558 aa)) are cytoplasmic. Tyr1082, Tyr1096, and Tyr1100 each carry phosphotyrosine. The Protein kinase domain maps to 1120-1396 (ITLIRGLGHG…IEYCTQDPDV (277 aa)). Residues 1126–1134 (LGHGAFGEV) and His1128 each bind ATP. Tyr1135 is modified (phosphotyrosine). ATP contacts are provided by residues Lys1154 and 1201 to 1203 (ELM). Residue Asp1253 is the Proton acceptor of the active site. Residue Asp1274 coordinates ATP. Position 1282 is a phosphotyrosine (Tyr1282). The tract at residues 1412-1556 (EEKVPMRPKD…WTGPGAGPRR (145 aa)) is disordered. A compositionally biased stretch (basic and acidic residues) spans 1414–1423 (KVPMRPKDPE). The span at 1441 to 1461 (SAAPQPAALTAPGPSVKKPPG) shows a compositional bias: low complexity. Gly residues predominate over residues 1462–1472 (AGAGAGAGAGA). Polar residues predominate over residues 1506–1518 (NKPTSLWNPTYGS). A Phosphotyrosine modification is found at Tyr1516. The span at 1543–1552 (AEGGWTGPGA) shows a compositional bias: gly residues.

Belongs to the protein kinase superfamily. Tyr protein kinase family. Insulin receptor subfamily. Homodimer; homodimerizes following heparin- and ligand-binding. Interacts with CBL, IRS1, PIK3R1 and PLCG1. Interacts with FRS2 and SHC1. Interacts with PTN and MDK. Phosphorylated at tyrosine residues by autocatalysis, which activates kinase activity. In cells not stimulated by a ligand, receptor protein tyrosine phosphatase beta and zeta complex (PTPRB/PTPRZ1) dephosphorylates ALK at the sites in ALK that are undergoing autophosphorylation through autoactivation. As to expression, mainly expressed in central nervous system (CNS) and other parts of the brain such as the paraventricular nucleus (PVN) of the hypothalamus. Expression is also found in peripheral nervous systems, eye, nasal epithelium, olfactory nerve, tongue, skin, tissue surrounding the esophagus, stomach, midgut, as well as testis and ovary.

The protein localises to the cell membrane. It catalyses the reaction L-tyrosyl-[protein] + ATP = O-phospho-L-tyrosyl-[protein] + ADP + H(+). Activated upon ALKAL2 ligand-binding. ALKAL2-driven activation is coupled with heparin-binding. Following ligand-binding, homodimerizes and autophosphorylates, activating its kinase activity. Inactivated through dephosphorylation by receptor protein tyrosine phosphatase beta and zeta complex (PTPRB/PTPRZ1) when there is no stimulation by a ligand. Functionally, neuronal receptor tyrosine kinase that is essentially and transiently expressed in specific regions of the central and peripheral nervous systems and plays an important role in the genesis and differentiation of the nervous system. Also acts as a key thinness protein involved in the resistance to weight gain: in hypothalamic neurons, controls energy expenditure acting as a negative regulator of white adipose tissue lipolysis and sympathetic tone to fine-tune energy homeostasis. Following activation by ALKAL2 ligand at the cell surface, transduces an extracellular signal into an intracellular response. In contrast, ALKAL1 is not a potent physiological ligand for ALK. Ligand-binding to the extracellular domain induces tyrosine kinase activation, leading to activation of the mitogen-activated protein kinase (MAPK) pathway. Phosphorylates almost exclusively at the first tyrosine of the Y-x-x-x-Y-Y motif. Induces tyrosine phosphorylation of CBL, FRS2, IRS1 and SHC1, as well as of the MAP kinases MAPK1/ERK2 and MAPK3/ERK1. ALK activation may also be regulated by pleiotrophin (PTN) and midkine (MDK). PTN-binding induces MAPK pathway activation, which is important for the anti-apoptotic signaling of PTN and regulation of cell proliferation. MDK-binding induces phosphorylation of the ALK target insulin receptor substrate (IRS1), activates mitogen-activated protein kinases (MAPKs) and PI3-kinase, resulting also in cell proliferation induction. Drives NF-kappa-B activation, probably through IRS1 and the activation of the AKT serine/threonine kinase. Recruitment of IRS1 to activated ALK and the activation of NF-kappa-B are essential for the autocrine growth and survival signaling of MDK. The protein is ALK tyrosine kinase receptor of Mus musculus (Mouse).